The sequence spans 127 residues: Large ribosomal subunit protein eL32B (127 aa).

Belongs to the eukaryotic ribosomal protein eL32 family. In terms of assembly, component of the large ribosomal subunit (LSU). Mature yeast ribosomes consist of a small (40S) and a large (60S) subunit. The 40S small subunit contains 1 molecule of ribosomal RNA (18S rRNA) and at least 33 different proteins. The large 60S subunit contains 3 rRNA molecules (25S, 5.8S and 5S rRNA) and at least 46 different proteins.

It localises to the cytoplasm. The protein localises to the nucleus. It is found in the nucleolus. In terms of biological role, component of the ribosome, a large ribonucleoprotein complex responsible for the synthesis of proteins in the cell. The small ribosomal subunit (SSU) binds messenger RNAs (mRNAs) and translates the encoded message by selecting cognate aminoacyl-transfer RNA (tRNA) molecules. The large subunit (LSU) contains the ribosomal catalytic site termed the peptidyl transferase center (PTC), which catalyzes the formation of peptide bonds, thereby polymerizing the amino acids delivered by tRNAs into a polypeptide chain. The nascent polypeptides leave the ribosome through a tunnel in the LSU and interact with protein factors that function in enzymatic processing, targeting, and the membrane insertion of nascent chains at the exit of the ribosomal tunnel. This chain is Large ribosomal subunit protein eL32B (rpl3201), found in Schizosaccharomyces pombe (strain 972 / ATCC 24843) (Fission yeast).